A 1264-amino-acid polypeptide reads, in one-letter code: ATP-dependent helicase/nuclease subunit A (1264 aa).

In terms of domain architecture, UvrD-like helicase ATP-binding spans 12 to 482; that stretch reads EQFTDSQWQA…IILAENFRSR (471 aa). An ATP-binding site is contributed by 33–40; that stretch reads ASAGSGKT. In terms of domain architecture, UvrD-like helicase C-terminal spans 520 to 808; that stretch reads SEAADYSTEL…RVMTIHASKG (289 aa).

Belongs to the helicase family. AddA subfamily. Heterodimer of AddA and AddB/RexB. Requires Mg(2+) as cofactor.

It catalyses the reaction Couples ATP hydrolysis with the unwinding of duplex DNA by translocating in the 3'-5' direction.. It carries out the reaction ATP + H2O = ADP + phosphate + H(+). In terms of biological role, the heterodimer acts as both an ATP-dependent DNA helicase and an ATP-dependent, dual-direction single-stranded exonuclease. Recognizes the chi site generating a DNA molecule suitable for the initiation of homologous recombination. The AddA nuclease domain is required for chi fragment generation; this subunit has the helicase and 3' -&gt; 5' nuclease activities. The sequence is that of ATP-dependent helicase/nuclease subunit A from Enterococcus faecalis (strain ATCC 700802 / V583).